Consider the following 76-residue polypeptide: Large ribosomal subunit protein bL31 (76 aa).

Belongs to the bacterial ribosomal protein bL31 family. Type A subfamily. In terms of assembly, part of the 50S ribosomal subunit.

In terms of biological role, binds the 23S rRNA. The polypeptide is Large ribosomal subunit protein bL31 (Gluconacetobacter diazotrophicus (strain ATCC 49037 / DSM 5601 / CCUG 37298 / CIP 103539 / LMG 7603 / PAl5)).